The following is a 134-amino-acid chain: uncharacterized protein (134 aa).

This is an uncharacterized protein from Synechococcus elongatus (strain ATCC 33912 / PCC 7942 / FACHB-805) (Anacystis nidulans R2).